Here is a 116-residue protein sequence, read N- to C-terminus: Iron-sulfur cluster assembly protein CyaY (116 aa).

The protein belongs to the frataxin family.

Involved in iron-sulfur (Fe-S) cluster assembly. May act as a regulator of Fe-S biogenesis. The protein is Iron-sulfur cluster assembly protein CyaY of Polaromonas sp. (strain JS666 / ATCC BAA-500).